The sequence spans 194 residues: ATP-dependent Clp protease proteolytic subunit (194 aa).

The Nucleophile role is filled by serine 98. Histidine 123 is an active-site residue.

The protein belongs to the peptidase S14 family. In terms of assembly, fourteen ClpP subunits assemble into 2 heptameric rings which stack back to back to give a disk-like structure with a central cavity, resembling the structure of eukaryotic proteasomes.

Its subcellular location is the cytoplasm. It catalyses the reaction Hydrolysis of proteins to small peptides in the presence of ATP and magnesium. alpha-casein is the usual test substrate. In the absence of ATP, only oligopeptides shorter than five residues are hydrolyzed (such as succinyl-Leu-Tyr-|-NHMec, and Leu-Tyr-Leu-|-Tyr-Trp, in which cleavage of the -Tyr-|-Leu- and -Tyr-|-Trp bonds also occurs).. In terms of biological role, cleaves peptides in various proteins in a process that requires ATP hydrolysis. Has a chymotrypsin-like activity. Plays a major role in the degradation of misfolded proteins. This chain is ATP-dependent Clp protease proteolytic subunit, found in Wigglesworthia glossinidia brevipalpis.